The chain runs to 365 residues: Transmembrane protein 25 (365 aa).

A signal peptide spans 1–26 (MELPLSQATLRHTLLLLPALLSSGQG). Residues 27 to 232 (ELAPQIDGQT…APGLLATRIE (206 aa)) lie on the Extracellular side of the membrane. An Ig-like domain is found at 30–123 (PQIDGQTWAE…SGRPANASVI (94 aa)). The cysteines at positions 52 and 107 are disulfide-linked. N-linked (GlcNAc...) asparagine glycans are attached at residues Asn-106, Asn-162, Asn-192, and Asn-205. A helical membrane pass occupies residues 233-253 (VPLLGIVVAGGLALGTLVGFS). The Cytoplasmic segment spans residues 254 to 365 (TLVACLVCRK…SSVSSDEIWL (112 aa)).

In terms of assembly, interacts with GRIN2B. In terms of tissue distribution, expressed throughout the brain with higher levels within the hippocampus.

The protein localises to the late endosome. It is found in the lysosome. It localises to the cell membrane. Its subcellular location is the secreted. In neurons, modulates the degradation of NMDA receptor GRIN2B subunit. Plays a role in the regulation of neuronal excitability. This is Transmembrane protein 25 from Mus musculus (Mouse).